A 675-amino-acid chain; its full sequence is Collagen alpha-3(IX) chain (675 aa).

The N-terminal stretch at 1–21 (MTVFPTLGLLFLCQLLATTSA) is a signal peptide. Disordered stretches follow at residues 22-517 (QRVG…KEAS) and 542-660 (KPLS…ICDT). Residues 25-515 (GPQGPPGPRG…TGKPGPPGKE (491 aa)) form a triple-helical region 3 (COL3) region. Composition is skewed to pro residues over residues 27 to 38 (QGPPGPRGPPGP) and 51 to 60 (SGLPGPPGPK). Residues 62 to 87 (APGKPGAAGEAGLPGLPGVDGLTGTD) are compositionally biased toward low complexity. A compositionally biased stretch (pro residues) spans 105 to 125 (AGPPGPAGKGLPGPPGPPGPS). The segment covering 126-135 (GLPGGNGFRG) has biased composition (gly residues). Pro residues-rich tracts occupy residues 136–155 (PPGPSGLPGFPGPPGPPGPP) and 173–184 (LCPPGPPGPPGM). The segment covering 218 to 233 (PGSVGLQGPRGLRGLP) has biased composition (low complexity). The Cell attachment site motif lies at 242-244 (RGD). Positions 301–317 (KDGRDGAPGLDGEKGDA) are enriched in basic and acidic residues. A compositionally biased stretch (low complexity) spans 361–374 (EPGIPGDVGIPGDR). N-linked (GlcNAc...) asparagine glycosylation is present at N479. A compositionally biased stretch (low complexity) spans 481 to 508 (TAGAPGIPGHPGPMGHQGEQGVPGITGK). The tract at residues 516-546 (ASEQHIRELCGEMINDQIAQLAANLRKPLSP) is nonhelical region 3 (NC3). A triple-helical region 2 (COL2) region spans residues 547–626 (GMTGRPGPAG…QGLPGVPGIS (80 aa)). Over residues 569–582 (HPGARGPPGYRGPT) the composition is skewed to low complexity. Positions 591–593 (RGD) match the Cell attachment site motif. A compositionally biased stretch (low complexity) spans 613 to 624 (DQGPQGLPGVPG). Residues 627–631 (KNGRD) form a nonhelical region 2 (NC2) region. The tract at residues 632–658 (GAQGEPGLPGDPGTPGAVGAQGTPGIC) is triple-helical region 1 (COL1). Positions 659-675 (DTSACMGAVGASTSKKS) are nonhelical region 1 (NC1).

This sequence belongs to the fibril-associated collagens with interrupted helices (FACIT) family. Trimers composed of three different chains: alpha 1(IX), alpha 2(IX), and alpha 3(IX). Prolines at the third position of the tripeptide repeating unit (G-X-Y) are hydroxylated in some or all of the chains.

The protein localises to the secreted. It is found in the extracellular space. Its subcellular location is the extracellular matrix. In terms of biological role, collagen type IX is a minor cartilage non-fibrillar collagen. It is associated with type II collagen fibrils. This Gallus gallus (Chicken) protein is Collagen alpha-3(IX) chain (COL9A3).